Reading from the N-terminus, the 203-residue chain is Outer-membrane lipoprotein carrier protein (203 aa).

Residues M1–A21 form the signal peptide.

It belongs to the LolA family. As to quaternary structure, monomer.

It is found in the periplasm. Participates in the translocation of lipoproteins from the inner membrane to the outer membrane. Only forms a complex with a lipoprotein if the residue after the N-terminal Cys is not an aspartate (The Asp acts as a targeting signal to indicate that the lipoprotein should stay in the inner membrane). This chain is Outer-membrane lipoprotein carrier protein, found in Sodalis glossinidius (strain morsitans).